The primary structure comprises 331 residues: 6-phosphogluconolactonase (331 aa).

It belongs to the cycloisomerase 2 family.

It catalyses the reaction 6-phospho-D-glucono-1,5-lactone + H2O = 6-phospho-D-gluconate + H(+). It functions in the pathway carbohydrate degradation; pentose phosphate pathway; D-ribulose 5-phosphate from D-glucose 6-phosphate (oxidative stage): step 2/3. Catalyzes the hydrolysis of 6-phosphogluconolactone to 6-phosphogluconate. The polypeptide is 6-phosphogluconolactonase (Salmonella paratyphi B (strain ATCC BAA-1250 / SPB7)).